A 471-amino-acid chain; its full sequence is 3-isopropylmalate dehydratase large subunit (471 aa).

3 residues coordinate [4Fe-4S] cluster: C349, C409, and C412.

This sequence belongs to the aconitase/IPM isomerase family. LeuC type 1 subfamily. As to quaternary structure, heterodimer of LeuC and LeuD. Requires [4Fe-4S] cluster as cofactor.

It carries out the reaction (2R,3S)-3-isopropylmalate = (2S)-2-isopropylmalate. Its pathway is amino-acid biosynthesis; L-leucine biosynthesis; L-leucine from 3-methyl-2-oxobutanoate: step 2/4. In terms of biological role, catalyzes the isomerization between 2-isopropylmalate and 3-isopropylmalate, via the formation of 2-isopropylmaleate. The sequence is that of 3-isopropylmalate dehydratase large subunit from Aliivibrio fischeri (strain MJ11) (Vibrio fischeri).